Consider the following 248-residue polypeptide: 2,3-bisphosphoglycerate-dependent phosphoglycerate mutase (248 aa).

Substrate contacts are provided by residues 8–15 (RHGESTWN), 21–22 (TG), Arg60, 87–90 (ERHY), Lys98, 114–115 (RR), and 183–184 (GN). His9 acts as the Tele-phosphohistidine intermediate in catalysis. Glu87 functions as the Proton donor/acceptor in the catalytic mechanism.

It belongs to the phosphoglycerate mutase family. BPG-dependent PGAM subfamily. In terms of assembly, homodimer.

The enzyme catalyses (2R)-2-phosphoglycerate = (2R)-3-phosphoglycerate. The protein operates within carbohydrate degradation; glycolysis; pyruvate from D-glyceraldehyde 3-phosphate: step 3/5. Its function is as follows. Catalyzes the interconversion of 2-phosphoglycerate and 3-phosphoglycerate. The sequence is that of 2,3-bisphosphoglycerate-dependent phosphoglycerate mutase from Burkholderia ambifaria (strain ATCC BAA-244 / DSM 16087 / CCUG 44356 / LMG 19182 / AMMD) (Burkholderia cepacia (strain AMMD)).